The sequence spans 343 residues: N-acetyl-gamma-glutamyl-phosphate reductase (343 aa).

Residue cysteine 147 is part of the active site.

It belongs to the NAGSA dehydrogenase family. Type 1 subfamily.

It localises to the cytoplasm. It catalyses the reaction N-acetyl-L-glutamate 5-semialdehyde + phosphate + NADP(+) = N-acetyl-L-glutamyl 5-phosphate + NADPH + H(+). The protein operates within amino-acid biosynthesis; L-arginine biosynthesis; N(2)-acetyl-L-ornithine from L-glutamate: step 3/4. Catalyzes the NADPH-dependent reduction of N-acetyl-5-glutamyl phosphate to yield N-acetyl-L-glutamate 5-semialdehyde. In Staphylococcus aureus (strain USA300), this protein is N-acetyl-gamma-glutamyl-phosphate reductase.